Reading from the N-terminus, the 494-residue chain is Rho GTPase-activating protein 19 (494 aa).

The residue at position 2 (alanine 2) is an N-acetylalanine. Phosphoserine is present on residues serine 7 and serine 31. The region spanning 102 to 308 (MSLKRKEKGV…FMIKHSQKLF (207 aa)) is the Rho-GAP domain. The segment at 399–451 (QSLTQTPGREPSTPRVQKRARSRSFSGLIKRKVLGSQMTSEKKNSSPAPESVA) is disordered. Residues serine 422, serine 438, and serine 470 each carry the phosphoserine modification. Threonine 478 carries the post-translational modification Phosphothreonine.

Functionally, GTPase activator for the Rho-type GTPases by converting them to an inactive GDP-bound state. The chain is Rho GTPase-activating protein 19 (Arhgap19) from Mus musculus (Mouse).